A 572-amino-acid polypeptide reads, in one-letter code: Phosphoglucomutase-1 (572 aa).

Substrate contacts are provided by residues Thr-23, Arg-27, Ser-120 to His-121, and Lys-133. The active-site Phosphoserine intermediate is the Ser-120. Ser-120 serves as a coordination point for Mg(2+). Residues Asp-288, Asp-290, and Asp-292 each contribute to the Mg(2+) site. Residues Asp-292–Arg-293, Thr-356, Glu-375–Ser-377, Lys-388, and Arg-524 contribute to the substrate site.

The protein belongs to the phosphohexose mutase family. The cofactor is Mg(2+).

The protein resides in the cytoplasm. It catalyses the reaction alpha-D-glucose 1-phosphate = alpha-D-glucose 6-phosphate. In terms of biological role, this enzyme participates in both the breakdown and synthesis of glucose. The polypeptide is Phosphoglucomutase-1 (pgmA) (Dictyostelium discoideum (Social amoeba)).